Reading from the N-terminus, the 208-residue chain is N-(5'-phosphoribosyl)anthranilate isomerase (208 aa).

Belongs to the TrpF family.

It carries out the reaction N-(5-phospho-beta-D-ribosyl)anthranilate = 1-(2-carboxyphenylamino)-1-deoxy-D-ribulose 5-phosphate. It participates in amino-acid biosynthesis; L-tryptophan biosynthesis; L-tryptophan from chorismate: step 3/5. This Natronomonas pharaonis (strain ATCC 35678 / DSM 2160 / CIP 103997 / JCM 8858 / NBRC 14720 / NCIMB 2260 / Gabara) (Halobacterium pharaonis) protein is N-(5'-phosphoribosyl)anthranilate isomerase.